A 273-amino-acid chain; its full sequence is Sulfur carrier protein FdhD (273 aa).

Cysteine 124 serves as the catalytic Cysteine persulfide intermediate. Residue 263 to 268 coordinates Mo-bis(molybdopterin guanine dinucleotide); it reads FCRQSR.

The protein belongs to the FdhD family.

Its subcellular location is the cytoplasm. Its function is as follows. Required for formate dehydrogenase (FDH) activity. Acts as a sulfur carrier protein that transfers sulfur from IscS to the molybdenum cofactor prior to its insertion into FDH. The polypeptide is Sulfur carrier protein FdhD (Acinetobacter baylyi (strain ATCC 33305 / BD413 / ADP1)).